Here is a 77-residue protein sequence, read N- to C-terminus: Liver-expressed antimicrobial peptide 2 (77 aa).

The N-terminal stretch at 1–22 (MWHLKLFAVLMICLLLLAQVDG) is a signal peptide. Positions 23-37 (SPIPQQSSAKRRPRR) are excised as a propeptide. 2 disulfides stabilise this stretch: Cys54–Cys65 and Cys60–Cys70.

It belongs to the LEAP2 family.

It is found in the secreted. Has an antimicrobial activity. This is Liver-expressed antimicrobial peptide 2 (LEAP2) from Bos taurus (Bovine).